Here is a 366-residue protein sequence, read N- to C-terminus: Chorismate synthase (366 aa).

NADP(+) contacts are provided by arginine 48 and arginine 54. FMN contacts are provided by residues 125–127 (RSS), 241–242 (NA), glycine 285, 300–304 (KPTSS), and arginine 326.

Belongs to the chorismate synthase family. As to quaternary structure, homotetramer. Requires FMNH2 as cofactor.

It carries out the reaction 5-O-(1-carboxyvinyl)-3-phosphoshikimate = chorismate + phosphate. The protein operates within metabolic intermediate biosynthesis; chorismate biosynthesis; chorismate from D-erythrose 4-phosphate and phosphoenolpyruvate: step 7/7. Its function is as follows. Catalyzes the anti-1,4-elimination of the C-3 phosphate and the C-6 proR hydrogen from 5-enolpyruvylshikimate-3-phosphate (EPSP) to yield chorismate, which is the branch point compound that serves as the starting substrate for the three terminal pathways of aromatic amino acid biosynthesis. This reaction introduces a second double bond into the aromatic ring system. The chain is Chorismate synthase from Cereibacter sphaeroides (strain ATCC 17029 / ATH 2.4.9) (Rhodobacter sphaeroides).